We begin with the raw amino-acid sequence, 250 residues long: Putative (5-formylfuran-3-yl)methyl phosphate synthase (250 aa).

The active-site Schiff-base intermediate with substrate is the lysine 29. The active-site Proton acceptor is the lysine 87.

This sequence belongs to the MfnB family.

It carries out the reaction 2 D-glyceraldehyde 3-phosphate = 4-(hydroxymethyl)-2-furancarboxaldehyde phosphate + phosphate + 2 H2O. In terms of biological role, catalyzes the formation of 4-(hydroxymethyl)-2-furancarboxaldehyde phosphate (4-HFC-P) from two molecules of glyceraldehyde-3-P (GA-3-P). In Streptomyces griseus subsp. griseus (strain JCM 4626 / CBS 651.72 / NBRC 13350 / KCC S-0626 / ISP 5235), this protein is Putative (5-formylfuran-3-yl)methyl phosphate synthase.